The chain runs to 461 residues: Lysosomal proton-coupled steroid conjugate and bile acid symporter SLC46A3 (461 aa).

The signal sequence occupies residues 1 to 25 (MKILFVEPAIFLSAFAMTLTGPLTT). Residues 26-73 (QYVYRRIWEETGNYTFSSDSNISECEKNKSSPIFAFQEEVQKKVSRFN) lie on the Extracellular side of the membrane. 3 N-linked (GlcNAc...) asparagine glycosylation sites follow: Asn38, Asn46, and Asn53. The helical transmembrane segment at 74 to 94 (LQMDISGLIPGLVSTFILLSI) threads the bilayer. Residues 95–101 (SDHYGRK) are Cytoplasmic-facing. A helical membrane pass occupies residues 102-124 (FPMILSSVGALATSVWLCLLCYF). Residues 125 to 133 (AFPFQLLIA) lie on the Extracellular side of the membrane. The chain crosses the membrane as a helical span at residues 134 to 156 (STFIGAFCGNYTTFWGACFAYIV). Residues 157-170 (DQCKEHKQKTIRIA) are Cytoplasmic-facing. The helical transmembrane segment at 171-191 (IIDFLLGLVTGLTGLSSGYFI) threads the bilayer. Over 192–197 (RELGFE) the chain is Extracellular. Residues 198–218 (WSFLIIAVSLAVNLIYILFFL) form a helical membrane-spanning segment. The Cytoplasmic portion of the chain corresponds to 219–261 (GDPVKECSSQNVTMSCSEGFKNLFYRTYMLFKNASGKRRFLLC). Residues 262–282 (LLLFTVITYFFVVIGIAPIFI) form a helical membrane-spanning segment. The Extracellular segment spans residues 283–294 (LYELDSPLCWNE). Residues 295–315 (VFIGYGSALGSASFLTSFLGI) traverse the membrane as a helical segment. Residues 316–324 (WLFSYCMED) lie on the Cytoplasmic side of the membrane. Residues 325-345 (IHMAFIGIFTTMTGMAMTAFA) traverse the membrane as a helical segment. Residues 346–347 (ST) lie on the Extracellular side of the membrane. The helical transmembrane segment at 348–368 (TLMMFLARVPFLFTIVPFSVL) threads the bilayer. Residues 369–382 (RSMLSKVVRSTEQG) are Cytoplasmic-facing. The chain crosses the membrane as a helical span at residues 383 to 403 (TLFACIAFLETLGGVTAVSTF). Topologically, residues 404–415 (NGIYSATVAWYP) are extracellular. Residues 416 to 436 (GFTFLLSAGLLLLPAISLCVV) form a helical membrane-spanning segment. Topologically, residues 437-461 (KCTSWNEGSYELLIQEESSEDASDR) are cytoplasmic. The short motif at 446–449 (YELL) is the Tyrosine-based lysosomal-sorting motif element.

This sequence belongs to the major facilitator superfamily. SLC46A family.

The protein localises to the lysosome membrane. It carries out the reaction estrone 3-sulfate(out) + n H(+)(out) = estrone 3-sulfate(in) + n H(+)(in). The catalysed reaction is 25-hydroxyvitamin D3 sulfate(out) + n H(+)(out) = 25-hydroxyvitamin D3 sulfate(in) + n H(+)(in). The enzyme catalyses cholate(out) + n H(+)(out) = cholate(in) + n H(+)(in). It catalyses the reaction glycocholate(out) + n H(+)(out) = glycocholate(in) + n H(+)(in). It carries out the reaction taurocholate(out) + n H(+)(out) = taurocholate(in) + n H(+)(in). The catalysed reaction is dehydroepiandrosterone 3-sulfate(out) + n H(+)(out) = dehydroepiandrosterone 3-sulfate(in) + n H(+)(in). The enzyme catalyses N-acetyl-D-muramoyl-L-alanyl-D-isoglutamine(out) + n H(+)(out) = N-acetyl-D-muramoyl-L-alanyl-D-isoglutamine(in) + n H(+)(in). It catalyses the reaction 2',3'-cGAMP(out) + n H(+)(out) = 2',3'-cGAMP(in) + n H(+)(in). Lysosomal proton-coupled steroid conjugate and bile acid transporter. Preferentially recognizes lipophilic steroid conjugates or bile acis as endogenous substrates and seems to mediate escape from lysosomes to the cytoplasm. Modulates hepatic cytosolic copper homeostasis, maybe acting as a lysosomal copper transporter and sequestering copper ions in the lysosome. Transports catabolites of non-cleavable antibody-drug conjugates from the lysosome to the cytoplasm. Delivers pathogen-associated molecular patterns to cytosolic pattern recognition receptors as part of the innate immune response to microbes. Selectively transports bacterial muramyl dipeptide (MDP) into the cytosol for recognition by NOD2, triggering inflammatory responses. Likely acts as a redundant importer of cyclic GMP-AMP dinucleotides (cGAMPs) in monocyte and macrophage cell lineages. The transport mechanism, its electrogenicity and stoichiometry remain to be elucidated. The sequence is that of Lysosomal proton-coupled steroid conjugate and bile acid symporter SLC46A3 from Homo sapiens (Human).